Consider the following 326-residue polypeptide: Serpentine receptor class gamma-14 (326 aa).

The next 7 membrane-spanning stretches (helical) occupy residues 36 to 56, 67 to 83, 115 to 135, 156 to 176, 204 to 224, 243 to 263, and 274 to 294; these read QIIY…TILW, FFTL…SILI, IIML…VLLV, LKYV…NIAI, FQLV…AITL, VIIS…SFFF, and GFSF…MICV.

This sequence belongs to the nematode receptor-like protein srg family.

Its subcellular location is the membrane. The chain is Serpentine receptor class gamma-14 (srg-14) from Caenorhabditis elegans.